The sequence spans 130 residues: Small ribosomal subunit protein uS8 (130 aa).

It belongs to the universal ribosomal protein uS8 family. In terms of assembly, part of the 30S ribosomal subunit. Contacts proteins S5 and S12.

Its function is as follows. One of the primary rRNA binding proteins, it binds directly to 16S rRNA central domain where it helps coordinate assembly of the platform of the 30S subunit. In Aster yellows witches'-broom phytoplasma (strain AYWB), this protein is Small ribosomal subunit protein uS8.